Reading from the N-terminus, the 207-residue chain is N-(5'-phosphoribosyl)anthranilate isomerase (207 aa).

This sequence belongs to the TrpF family.

It carries out the reaction N-(5-phospho-beta-D-ribosyl)anthranilate = 1-(2-carboxyphenylamino)-1-deoxy-D-ribulose 5-phosphate. It participates in amino-acid biosynthesis; L-tryptophan biosynthesis; L-tryptophan from chorismate: step 3/5. This is N-(5'-phosphoribosyl)anthranilate isomerase from Legionella pneumophila (strain Lens).